A 144-amino-acid polypeptide reads, in one-letter code: Sirohydrochlorin cobaltochelatase (144 aa).

The active-site Proton acceptor is H9. H9 provides a ligand contact to Co(2+). H9 is a Ni(2+) binding site. Substrate is bound by residues E45 and 70–75 (LAPGNH). Position 75 (H75) interacts with Co(2+). H75 lines the Ni(2+) pocket. The disordered stretch occupies residues 89–112 (GDDEGGHHHHHDHEHHHHHHDTTA). Over residues 95 to 108 (HHHHHDHEHHHHHH) the composition is skewed to basic residues.

Belongs to the CbiX family. CbiXS subfamily. As to quaternary structure, homotetramer; dimer of dimers.

The enzyme catalyses Co-sirohydrochlorin + 2 H(+) = sirohydrochlorin + Co(2+). The catalysed reaction is Ni-sirohydrochlorin + 2 H(+) = sirohydrochlorin + Ni(2+). The protein operates within cofactor biosynthesis; adenosylcobalamin biosynthesis; cob(II)yrinate a,c-diamide from sirohydrochlorin (anaerobic route): step 1/10. Functionally, catalyzes the insertion of Co(2+) into sirohydrochlorin as part of the anaerobic pathway to cobalamin biosynthesis. Involved in the biosynthesis of the unique nickel-containing tetrapyrrole coenzyme F430, the prosthetic group of methyl-coenzyme M reductase (MCR), which plays a key role in methanogenesis and anaerobic methane oxidation. Catalyzes the insertion of Ni(2+) into sirohydrochlorin to yield Ni-sirohydrochlorin. This is Sirohydrochlorin cobaltochelatase from Methanococcus maripaludis (strain DSM 14266 / JCM 13030 / NBRC 101832 / S2 / LL).